Here is a 290-residue protein sequence, read N- to C-terminus: Ankyrin repeat and SOCS box protein 9 (290 aa).

Position 1 is an N-acetylmethionine (Met1). The span at 1–11 (MDGEQRGRSDR) shows a compositional bias: basic and acidic residues. The segment at 1–20 (MDGEQRGRSDRPGGSPHLPF) is disordered. ANK repeat units lie at residues 31–60 (SDWSPLHDAAIHGCLLTLRNLISQGWPVNI), 64–93 (DHVSPLHEACLRGHLSCASVLLSHGAQVNG), 97–126 (DWRTPLFNACVSGSQDCVNLLLQHGATPHP), 129–158 (ELASPIHEAAKRGYVKCIESLAAHGANIDY), 162–191 (HLGTPLYVACKNQQVACAKKLLESGVSVNQ), and 194–223 (GLDSPLHVVARMSSVELVHLLMDFGANAQA). Residues 236-290 (PLESPLIQIFLQNEGPQSLRQLCRLRIRKCFGIRQHHKISELLLPEDLKRFLLHL) form the SOCS box domain.

It belongs to the ankyrin SOCS box (ASB) family. As to quaternary structure, substrate-recognition component of the ECS(ASB9) complex, composed of ASB9, CUL5, ELOB, ELOC and RNF7/RBX2.

It is found in the mitochondrion. Its pathway is protein modification; protein ubiquitination. In terms of biological role, substrate-recognition component of a cullin-5-RING E3 ubiquitin-protein ligase complex (ECS complex, also named CRL5 complex), which mediates the ubiquitination and subsequent proteasomal degradation of target proteins. The ECS(ASB9) complex catalyzes ubiquitination of creatine kinases CKB and CKMT1A. The polypeptide is Ankyrin repeat and SOCS box protein 9 (Mus musculus (Mouse)).